The following is a 610-amino-acid chain: MTAADIDSKKRKRKHKAKKGEEAEPVKAHTNGAAAVEKPRKKSKKEHTPEPEVEDVVADASENDVESGAEEDEEQVNAELKEIAAKAKKAKKAKAAQDEDEDEDAAGSGANALAVADLPSGTSIPTVDDPTRFDELNLSERTMEAIKTMGFESMTEIQRKAIPPLLSGKDVLGAAKTGSGKTLAFLIPAIEMLSSMRFKPRNGTGVIVVSPTRELALQIFGVARELMEKHSQTFGIVIGGANRRAEAEKLAKGVNLLIATPGRLLDHLHNTQGFVFKNLKSLIIDEADRILEVGFEDEMRSIIKILPTDRQTMLFSATQTTKVEDLARISLKAGPLYINVDYRKEHSTVEGLEQGYVICDSDTRFRLLFSFLKKHQKKKVIVFFSSCNSVKFYAELLNYIDLPVLELHGKLKQQARTNRFFEFCNAQSGTLICTDVAARGLDIPEVDWVIQFDPPDDPRDYIHRVGRTARGSEGKGRSLMFLLPSEIGFLKLLKEARVPLVEFELPANKILNIQSQLEALITKNYYLNKSAKDGYRSYLQAYASHSLRSVFDVHKLDLVKVAKSFGFSTPPRIDISLGASLSRDKKVEGRREYGRQPQQGRRPMKPNKRF.

Disordered regions lie at residues 1-81 (MTAA…AELK) and 112-131 (ALAVADLPSGTSIPTVDDPT). Positions 9 to 18 (KKRKRKHKAK) are enriched in basic residues. Over residues 51–76 (PEVEDVVADASENDVESGAEEDEEQV) the composition is skewed to acidic residues. Positions 131-159 (TRFDELNLSERTMEAIKTMGFESMTEIQR) match the Q motif motif. One can recognise a Helicase ATP-binding domain in the interval 162–337 (IPPLLSGKDV…RISLKAGPLY (176 aa)). 175-182 (AKTGSGKT) is an ATP binding site. The DEAD box motif lies at 285–288 (DEAD). The Helicase C-terminal domain maps to 351–521 (GLEQGYVICD…NIQSQLEALI (171 aa)). The span at 584–594 (DKKVEGRREYG) shows a compositional bias: basic and acidic residues. The tract at residues 584-610 (DKKVEGRREYGRQPQQGRRPMKPNKRF) is disordered.

Belongs to the DEAD box helicase family. DDX18/HAS1 subfamily. Associates in the nucleolus with the 60S and pre-60S ribosomal subunits.

The protein resides in the nucleus. It is found in the nucleolus. The catalysed reaction is ATP + H2O = ADP + phosphate + H(+). In terms of biological role, ATP-dependent RNA helicase involved in 40S ribosomal subunit biogenesis. Required for the processing and cleavage of 35S pre-rRNA at sites A0, A1, and A2, leading to mature 18S rRNA. The sequence is that of ATP-dependent RNA helicase HAS1 (HAS1) from Phaeosphaeria nodorum (strain SN15 / ATCC MYA-4574 / FGSC 10173) (Glume blotch fungus).